The chain runs to 1235 residues: Receptor-type adenylate cyclase ESAG 4 (1235 aa).

The disordered stretch occupies residues 1-20 (MNMLHLSDRNASLAPSGGEH). The Cytoplasmic segment spans residues 1-32 (MNMLHLSDRNASLAPSGGEHSLPTGGAVCRDA). Residues 33 to 53 (MDILPVILRAPVALLLLLVVL) traverse the membrane as a helical segment. Topologically, residues 54-858 (PQLSVGAEAN…SNAGRISGAS (805 aa)) are extracellular. Asparagine 63, asparagine 90, asparagine 97, asparagine 362, asparagine 531, asparagine 566, asparagine 705, and asparagine 830 each carry an N-linked (GlcNAc...) asparagine glycan. A helical transmembrane segment spans residues 859–879 (LVGIIIGGALALFLVVALGVV). Topologically, residues 880–1235 (PYFFLRNTVI…VSSQVEERLL (356 aa)) are cytoplasmic. One can recognise a Guanylate cyclase domain in the interval 900 to 1054 (TLIFTDIESS…RTSNMAARTE (155 aa)). Residues aspartate 905 and aspartate 948 each coordinate Mg(2+).

Belongs to the adenylyl cyclase class-3 family. It depends on Mg(2+) as a cofactor.

It is found in the membrane. It carries out the reaction ATP = 3',5'-cyclic AMP + diphosphate. Functionally, could act as a receptor for an unknown ligand. This Trypanosoma brucei brucei protein is Receptor-type adenylate cyclase ESAG 4 (ESAG4).